An 83-amino-acid polypeptide reads, in one-letter code: U5-theraphotoxin-Hs1a 3 (83 aa).

The first 21 residues, 1–21 (MKTSMFLTLTGLVLLFVVCYA), serve as a signal peptide directing secretion. The propeptide occupies 22–49 (SESEEKDFPKELLSSIFAADSDFKVEER). 3 cysteine pairs are disulfide-bonded: Cys51-Cys63, Cys56-Cys68, and Cys62-Cys75.

The protein belongs to the neurotoxin 10 (Hwtx-1) family. 51 (Hntx-8) subfamily. Hntx-8 sub-subfamily. In terms of tissue distribution, expressed by the venom gland.

The protein resides in the secreted. Its function is as follows. Agglutinates erythrocytes. This Cyriopagopus schmidti (Chinese bird spider) protein is U5-theraphotoxin-Hs1a 3.